The following is a 999-amino-acid chain: Sarcoplasmic/endoplasmic reticulum calcium ATPase 3 (999 aa).

Met-1 is subject to N-acetylmethionine. At 1 to 48 the chain is on the cytoplasmic side; sequence MEEAHLLPAADVLRRFSVTAEGGLSPAQVTRARERYGPNELPTEEGKS. Ser-17 bears the Phosphoserine mark. Thr-19 bears the Phosphothreonine mark. Ser-25 carries the phosphoserine modification. Residues 49–69 form a helical membrane-spanning segment; sequence LWELVLEQFEDLLVRILLLAA. Topologically, residues 70-89 are extracellular; sequence LVSFVLACFEEGEETTTAFV. Residues 90–110 form a helical membrane-spanning segment; it reads EPLVIVLILVANAVVGVWQER. Residues 111-253 lie on the Cytoplasmic side of the membrane; that stretch reads NAENAIEALK…PERTPLQQKL (143 aa). The helical transmembrane segment at 254 to 273 threads the bilayer; that stretch reads DEFGRQLSRAISVICMAVWV. Residues 274-295 lie on the Extracellular side of the membrane; the sequence is INIGHFADPAHGGSWLRGAVYY. The helical transmembrane segment at 296 to 313 threads the bilayer; it reads FKIAVALAVAAIPEGLPA. Ca(2+) is bound by residues Val-304, Ala-305, Ile-307, and Glu-309. Residues 314–757 lie on the Cytoplasmic side of the membrane; that stretch reads VITTCLALGT…EEGRAIYSNM (444 aa). The active-site 4-aspartylphosphate intermediate is Asp-351. Mg(2+)-binding residues include Asp-351 and Thr-353. Residue Thr-353 coordinates ATP. Residues 370–400 form an interaction with phospholamban 1 region; it reads AEAEAGTCRLHEFTISGTTYAPEGEVRQGEQ. Phosphothreonine is present on Thr-415. The ATP site is built by Glu-442, Arg-489, Lys-515, Arg-560, Thr-625, Gly-626, and Asp-627. Ser-662 is modified (phosphoserine). ATP contacts are provided by Arg-678 and Lys-684. Position 703 (Asp-703) interacts with Mg(2+). Asn-706 provides a ligand contact to ATP. A helical transmembrane segment spans residues 758–777; that stretch reads KQFIRYLISSNVGEVVCIFL. The Ca(2+) site is built by Asn-768 and Glu-771. Residues 778 to 787 are Extracellular-facing; sequence TAILGLPEAL. A helical membrane pass occupies residues 788-808; that stretch reads IPVQLLWVNLVTDGLPATALG. Residues 788-808 are interaction with phospholamban 2; it reads IPVQLLWVNLVTDGLPATALG. Residues Asn-796, Thr-799, and Asp-800 each contribute to the Ca(2+) site. At 809-828 the chain is on the cytoplasmic side; the sequence is FNPPDLDIMEKRPRNPREAL. The chain crosses the membrane as a helical span at residues 829 to 851; it reads ISGWLFFRYLAIGVYVGLATVAA. The Extracellular segment spans residues 852–897; it reads ATWWFLYDAEGPQVTFYQLRNFLKCSEDNPLFTGTDCEVFESRFPT. A disulfide bridge links Cys-876 with Cys-888. The chain crosses the membrane as a helical span at residues 898-917; the sequence is TMALSVLVTTEMCNALNSVS. Glu-908 is a binding site for Ca(2+). Topologically, residues 918–930 are cytoplasmic; that stretch reads ENQSLLRMPPWLN. The chain crosses the membrane as a helical span at residues 931 to 949; sequence PWLLAAVAMSMALHFLILL. Over 950-964 the chain is Extracellular; sequence VPPLPLIFQVTPLSG. The helical transmembrane segment at 965–985 threads the bilayer; it reads RQWVVVLQISLPVILLDEALK. The Cytoplasmic segment spans residues 986–999; it reads YLSRKHVDEEKGRQ.

It belongs to the cation transport ATPase (P-type) (TC 3.A.3) family. Type IIA subfamily. As to quaternary structure, interacts with sarcolipin (SLN). Interacts with phospholamban (PLN). Interacts with myoregulin (MRLN). Interacts with DWORF. Interacts with VMP1. Interacts with TUNAR; the interaction occurs at low levels in low glucose conditions and is increased by high glucose levels. It depends on Mg(2+) as a cofactor. In terms of tissue distribution, expressed in endothelial tissues.

It is found in the endoplasmic reticulum membrane. The protein localises to the sarcoplasmic reticulum membrane. It catalyses the reaction Ca(2+)(in) + ATP + H2O = Ca(2+)(out) + ADP + phosphate + H(+). With respect to regulation, inhibited by sarcolipin (SLN), phospholamban (PLN) and myoregulin (MRLN). Enhanced by DWORF; DWORF increases activity by displacing sarcolipin (SLN), phospholamban (PLN) and myoregulin (MRLN). This magnesium-dependent enzyme catalyzes the hydrolysis of ATP coupled with the transport of calcium. Transports calcium ions from the cytosol into the sarcoplasmic/endoplasmic reticulum lumen. Contributes to calcium sequestration involved in muscular excitation/contraction. In Sus scrofa (Pig), this protein is Sarcoplasmic/endoplasmic reticulum calcium ATPase 3 (ATP2A3).